The primary structure comprises 699 residues: Nucleolar and coiled-body phosphoprotein 1 (699 aa).

The region spanning 10–42 (VPSDLYPLVLGFLRDNQLSEVANKFAKATGATQ) is the LisH domain. An N6-acetyllysine modification is found at Lys-33. The interval 65-637 (ERKLQANGPV…VREEEIEVDS (573 aa)) is disordered. Residues Lys-67 and Lys-76 each participate in a glycyl lysine isopeptide (Lys-Gly) (interchain with G-Cter in SUMO2) cross-link. The Acidic serine cluster 1 repeat unit spans residues 84-95 (SSDSEDSSEEEE). The interval 84-566 (SSDSEDSSEE…GKAAKNSEEE (483 aa)) is 11 X 12 AA approximate repeats of an acidic serine cluster. Over residues 86–97 (DSEDSSEEEEEV) the composition is skewed to acidic residues. Residues Ser-87, Ser-90, and Ser-91 each carry the phosphoserine modification. Ser-91 carries the post-translational modification Diphosphoserine. Residues 100–110 (PPAKKAAVPAK) show a composition bias toward low complexity. The stretch at 125–136 (ESSSSEESSDDD) is one Acidic serine cluster 2 repeat. Residues 144–159 (QPVQKGVKPQAKAAKA) show a composition bias toward low complexity. An Acidic serine cluster 3 repeat occupies 167-178 (SDSDSDSSSEDE). A Glycyl lysine isopeptide (Lys-Gly) (interchain with G-Cter in SUMO2) cross-link involves residue Lys-186. Thr-188 is subject to Phosphothreonine. A Glycyl lysine isopeptide (Lys-Gly) (interchain with G-Cter in SUMO2) cross-link involves residue Lys-193. Low complexity-rich tracts occupy residues 193-227 (KAQT…SSSS) and 236-261 (AATP…TTPT). Residues 204 to 382 (RAAPKIANGK…DDEAPSKPAG (179 aa)) are interaction with RPA194. Residues 221–232 (SSSSSSSDDSEE) form an Acidic serine cluster 4 repeat. The Acidic serine cluster 5 repeat unit spans residues 264–275 (SSSSEDSSSDEE). Residues 291 to 301 (SVPPPSAPPPK) are compositionally biased toward pro residues. A compositionally biased stretch (acidic residues) spans 321-333 (SSEDSSDESDSSS). The stretch at 325–336 (SSDESDSSSEEE) is one Acidic serine cluster 6 repeat. Residues Lys-342 and Lys-347 each participate in a glycyl lysine isopeptide (Lys-Gly) (interchain with G-Cter in SUMO2) cross-link. Ser-362, Ser-363, and Ser-366 each carry phosphoserine. Residues 363 to 375 (SDSSDSDSSEDDE) form an Acidic serine cluster 7 repeat. Residues 366–375 (SDSDSSEDDE) are compositionally biased toward acidic residues. Positions 381–397 (AGTTKNSSNKPAVTTKS) are enriched in polar residues. Glycyl lysine isopeptide (Lys-Gly) (interchain with G-Cter in SUMO2) cross-links involve residues Lys-390 and Lys-396. Position 397 is a phosphoserine (Ser-397). Residues 398 to 409 (PAVKPAAAPKQP) are compositionally biased toward low complexity. Residues Lys-401 and Lys-407 each participate in a glycyl lysine isopeptide (Lys-Gly) (interchain with G-Cter in SUMO2) cross-link. The residue at position 415 (Lys-415) is an N6-acetyllysine; alternate. Lys-415 is covalently cross-linked (Glycyl lysine isopeptide (Lys-Gly) (interchain with G-Cter in SUMO1); alternate). Lys-415 is covalently cross-linked (Glycyl lysine isopeptide (Lys-Gly) (interchain with G-Cter in SUMO2); alternate). Residues 425–436 (SSEEESSSSEEE) form an Acidic serine cluster 8 repeat. Glycyl lysine isopeptide (Lys-Gly) (interchain with G-Cter in SUMO2) cross-links involve residues Lys-440 and Lys-452. Low complexity-rich tracts occupy residues 441 to 476 (MVAT…SDSS) and 498 to 523 (AGGA…SSSD). Phosphoserine is present on Ser-456. The stretch at 470 to 481 (SSDSDSSSSEEE) is one Acidic serine cluster 9 repeat. A Glycyl lysine isopeptide (Lys-Gly) (interchain with G-Cter in SUMO2) cross-link involves residue Lys-505. Ser-508 carries the phosphoserine modification. The Acidic serine cluster 10 repeat unit spans residues 519 to 529 (SSSSDDSSEEE). Phosphoserine is present on Ser-538. A compositionally biased stretch (polar residues) spans 547–556 (NGTSALTAQN). The stretch at 555-566 (QNGKAAKNSEEE) is one Acidic serine cluster 11 repeat. At Ser-563 the chain carries Phosphoserine. Residue Lys-572 forms a Glycyl lysine isopeptide (Lys-Gly) (interchain with G-Cter in SUMO1) linkage. Lys-579 participates in a covalent cross-link: Glycyl lysine isopeptide (Lys-Gly) (interchain with G-Cter in SUMO2). Phosphoserine is present on residues Ser-580 and Ser-582. Residue Lys-604 forms a Glycyl lysine isopeptide (Lys-Gly) (interchain with G-Cter in SUMO2) linkage. Phosphothreonine is present on residues Thr-607 and Thr-610. A Glycyl lysine isopeptide (Lys-Gly) (interchain with G-Cter in SUMO2) cross-link involves residue Lys-613. A Phosphoserine modification is found at Ser-622. The span at 627-637 (RVREEEIEVDS) shows a compositional bias: basic and acidic residues. Ser-643 bears the Phosphoserine mark. Lys-647 is covalently cross-linked (Glycyl lysine isopeptide (Lys-Gly) (interchain with G-Cter in SUMO2)). Lys-663 is modified (N6-acetyllysine; alternate). A Glycyl lysine isopeptide (Lys-Gly) (interchain with G-Cter in SUMO2); alternate cross-link involves residue Lys-663. Arg-683 is modified (omega-N-methylarginine). At Ser-686 the chain carries Phosphoserine. A Glycyl lysine isopeptide (Lys-Gly) (interchain with G-Cter in SUMO2) cross-link involves residue Lys-695. The residue at position 698 (Ser-698) is a Phosphoserine.

It belongs to the NOLC1 family. Heterodimer; heterodimerizes with TCOF1 following monoubiquitination. Interacts with RNA polymerase I 194 kDa subunit (RPA194) and with casein kinase-II. Interacts with DKC1/NAP57, NOP58 and fibrillarin. Post-translationally, undergoes rapid and massive phosphorylation/dephosphorylation cycles on CK2 and PKC sites. NOLC1 is one of the mostly phosphorylated proteins in the cell. Ubiquitinated. Monoubiquitination by the BCR(KBTBD8) complex promotes the formation of a NOLC1-TCOF1 complex that acts as a platform to connect RNA polymerase I with enzymes responsible for ribosomal processing and modification, leading to remodel the translational program of differentiating cells in favor of neural crest specification. In terms of processing, pyrophosphorylated by 5-diphosphoinositol pentakisphosphate (5-IP7). Serine pyrophosphorylation is achieved by Mg(2+)-dependent, but enzyme independent transfer of a beta-phosphate from a inositol pyrophosphate to a pre-phosphorylated serine residue.

The protein resides in the nucleus. It is found in the nucleolus. Its subcellular location is the cytoplasm. Its function is as follows. Nucleolar protein that acts as a regulator of RNA polymerase I by connecting RNA polymerase I with enzymes responsible for ribosomal processing and modification. Required for neural crest specification: following monoubiquitination by the BCR(KBTBD8) complex, associates with TCOF1 and acts as a platform to connect RNA polymerase I with enzymes responsible for ribosomal processing and modification, leading to remodel the translational program of differentiating cells in favor of neural crest specification. Involved in nucleologenesis, possibly by playing a role in the maintenance of the fundamental structure of the fibrillar center and dense fibrillar component in the nucleolus. It has intrinsic GTPase and ATPase activities. This Homo sapiens (Human) protein is Nucleolar and coiled-body phosphoprotein 1.